The primary structure comprises 311 residues: Methionyl-tRNA formyltransferase (311 aa).

Residue 114–117 (SLLP) participates in (6S)-5,6,7,8-tetrahydrofolate binding.

This sequence belongs to the Fmt family.

The catalysed reaction is L-methionyl-tRNA(fMet) + (6R)-10-formyltetrahydrofolate = N-formyl-L-methionyl-tRNA(fMet) + (6S)-5,6,7,8-tetrahydrofolate + H(+). Functionally, attaches a formyl group to the free amino group of methionyl-tRNA(fMet). The formyl group appears to play a dual role in the initiator identity of N-formylmethionyl-tRNA by promoting its recognition by IF2 and preventing the misappropriation of this tRNA by the elongation apparatus. This chain is Methionyl-tRNA formyltransferase, found in Corynebacterium diphtheriae (strain ATCC 700971 / NCTC 13129 / Biotype gravis).